The following is a 558-amino-acid chain: MASSVTGDAETAISADSSTKRRGGGWITFPFMIATLLGLTIAAWGWLLNLIVYLIEEFNVKSIAAAQIANIVSGCICMVPAVAAIASDSFFGTIPVISVSAFISLMGVALLTLTASLDTLRPRPCETASILCQSPSKTQLGVLYTAITLASIGTGGTRFTLATAGANQYEKTKDQGSFFNWFFFTTYLAGAISATAIVYTEDNISWTLGFGLSVAANFFSFLVFVSGKRFYKHDKPLGSPFTSLLCVIFAALRKRKAVVSTNEKDYHNESITMPTKSFRFFNRAALKQEDEVKPDGTIRNPWRLCSVQQVEDFKAVIRIIPLALATIFLSTPIAMQLSLTVLQGLVMDRRLGPSFKIPAGSLQVITLLSTCLFIIVNDRVLYPFYQKLTGKHLTPLQRVGIGHAFNILSMAVTAIVEAKRLKIVQKGHFLGSSSVADMSVLWLFPPLVIVGIGEAFHFPGNVALCYQEFPESMRSTATSITSVVIGICFYTSTALIDLIQRTTAWLPDDINHGRVDNVYWILVIGGVLNLGYFLVCSWLYRYRNLKDDDHKQAANVSH.

12 helical membrane-spanning segments follow: residues 31-51, 63-83, 90-110, 140-162, 178-198, 204-224, 319-339, 357-377, 399-419, 440-460, 479-499, and 518-538; these read FMIA…LNLI, IAAA…PAVA, FFGT…GVAL, LGVL…FTLA, FFNW…TAIV, ISWT…FLVF, IIPL…QLSL, IPAG…IIVN, VGIG…VEAK, VLWL…HFPG, SITS…IDLI, and VYWI…VCSW.

It belongs to the major facilitator superfamily. Proton-dependent oligopeptide transporter (POT/PTR) (TC 2.A.17) family. As to expression, expressed in shoots and in the cortex of mature roots. Not expressed in root tip meristematic cells.

It is found in the cell membrane. Transporter involved in a passive nitrate efflux. Not competent for chloride transport. The chain is Protein NRT1/ PTR FAMILY 2.7 (NPF2.7) from Arabidopsis thaliana (Mouse-ear cress).